The sequence spans 987 residues: ATP-dependent 6-phosphofructokinase subunit alpha (987 aa).

Positions 1-580 (MQSQDSCYGV…LYENFLSTTV (580 aa)) are N-terminal catalytic PFK domain 1. Ser-3 is subject to Phosphoserine. Lys-89 participates in a covalent cross-link: Glycyl lysine isopeptide (Lys-Gly) (interchain with G-Cter in ubiquitin). Phosphoserine is present on residues Ser-166, Ser-179, Ser-185, Ser-189, and Ser-192. ATP is bound at residue Gly-215. Ser-217 carries the phosphoserine modification. ATP-binding positions include 278-279 (RS) and 308-311 (GDGS). Asp-309 serves as a coordination point for Mg(2+). Residues 354–356 (SID), Arg-391, and 398–400 (MGR) each bind beta-D-fructose 6-phosphate. The active-site Proton acceptor is Asp-356. The residue at position 450 (Thr-450) is a Phosphothreonine. Residues Glu-455, Lys-482, and 488 to 491 (HVQR) contribute to the beta-D-fructose 6-phosphate site. Positions 581-594 (KDDGSELLPVSDRL) are interdomain linker. The C-terminal regulatory PFK domain 2 stretch occupies residues 595–987 (NIGIVHVGAP…EVAALAAENK (393 aa)). Lys-625 participates in a covalent cross-link: Glycyl lysine isopeptide (Lys-Gly) (interchain with G-Cter in ubiquitin). Beta-D-fructose 2,6-bisphosphate-binding positions include Arg-665, 722–726 (TVSNN), Arg-760, 767–769 (QGG), Glu-827, Arg-853, 859–862 (HVQQ), and Arg-952.

It belongs to the phosphofructokinase type A (PFKA) family. ATP-dependent PFK group I subfamily. Eukaryotic two domain clade 'E' sub-subfamily. Heterooctamer of 4 alpha and 4 beta chains. The cofactor is Mg(2+).

Its subcellular location is the cytoplasm. The protein resides in the mitochondrion outer membrane. The enzyme catalyses beta-D-fructose 6-phosphate + ATP = beta-D-fructose 1,6-bisphosphate + ADP + H(+). It functions in the pathway carbohydrate degradation; glycolysis; D-glyceraldehyde 3-phosphate and glycerone phosphate from D-glucose: step 3/4. With respect to regulation, allosterically activated by ADP, AMP, or fructose 2,6-bisphosphate, and allosterically inhibited by ATP or citrate. Catalyzes the phosphorylation of D-fructose 6-phosphate to fructose 1,6-bisphosphate by ATP, the first committing step of glycolysis. This chain is ATP-dependent 6-phosphofructokinase subunit alpha (PFK1), found in Saccharomyces cerevisiae (strain ATCC 204508 / S288c) (Baker's yeast).